The chain runs to 357 residues: IGF-like family receptor 1 (357 aa).

The first 22 residues, 1–22 (MGPLRLLPTAVLLLAQAAPWEA), serve as a signal peptide directing secretion. Over 23 to 160 (SQHCGRLEYW…HKAPQQAWPS (138 aa)) the chain is Extracellular. Positions 100-147 (IPSGSRGGTGRPCREPVPNKEPCPLTPGKSSILSSQEPSSPGIPSVSW) are disordered. Low complexity predominate over residues 129-139 (SSILSSQEPSS). The helical transmembrane segment at 161–181 (LSFALFLVLVLLVTSAIILLA) threads the bilayer. The Cytoplasmic portion of the chain corresponds to 182-357 (LQRHHRRLDQ…KLGSSGACLA (176 aa)).

It is found in the cell membrane. In terms of biological role, probable cell membrane receptor for the IGF-like family protein IGFL. This is IGF-like family receptor 1 (IGFLR1) from Bos taurus (Bovine).